The sequence spans 239 residues: Purine nucleoside phosphorylase DeoD-type 1 (239 aa).

Position 5 (His5) interacts with a purine D-ribonucleoside. Phosphate is bound by residues Gly21, Arg25, Arg44, and 88–91; that span reads RVGS. Residues 180-182 and 204-205 each bind a purine D-ribonucleoside; these read EME and SD. Asp205 functions as the Proton donor in the catalytic mechanism.

The protein belongs to the PNP/UDP phosphorylase family. Homohexamer; trimer of homodimers.

The enzyme catalyses a purine D-ribonucleoside + phosphate = a purine nucleobase + alpha-D-ribose 1-phosphate. It catalyses the reaction a purine 2'-deoxy-D-ribonucleoside + phosphate = a purine nucleobase + 2-deoxy-alpha-D-ribose 1-phosphate. Catalyzes the reversible phosphorolytic breakdown of the N-glycosidic bond in the beta-(deoxy)ribonucleoside molecules, with the formation of the corresponding free purine bases and pentose-1-phosphate. The chain is Purine nucleoside phosphorylase DeoD-type 1 from Vibrio vulnificus (strain CMCP6).